A 377-amino-acid polypeptide reads, in one-letter code: MLLHNKTLAGKALAFIAEEGYVPSMREKFLGWNVPPEYSDLVHPHWRAFPAPGKHFHIGLAIIYSMLLIMSLVGNCCVIWIFSTSKSLRTPSNMFIVSLAIFDIIMAFEMPMLVISSFMERMIGWEIGCDVYSVFGSISGMGQAMTNAAIAFDRYRTISCPIDGRLNSKQAAVIIAFTWFWVTPFTVLPLLKVWGRYTTEGFLTTCSFDFLTDDEDTKVFVTCIFIWAYVIPLIFIILFYSRLLSSIRNHEKMLREQAKKMNVKSLVSNQDKERSAEVRIAKVAFTIFFLFLLAWTPYATVALIGVYGNRELLTPVSTMLPAVFAKTVSCIDPWIYAINHPRYRQELQKRCKWMGIHEPETTSDATSAQTEKIKTDE.

The Extracellular segment spans residues 1–56; it reads MLLHNKTLAGKALAFIAEEGYVPSMREKFLGWNVPPEYSDLVHPHWRAFPAPGKHF. Asn5 is a glycosylation site (N-linked (GlcNAc...) asparagine). A helical membrane pass occupies residues 57 to 81; it reads HIGLAIIYSMLLIMSLVGNCCVIWI. Residues 82-93 lie on the Cytoplasmic side of the membrane; sequence FSTSKSLRTPSN. Residues 94–119 form a helical membrane-spanning segment; the sequence is MFIVSLAIFDIIMAFEMPMLVISSFM. Topologically, residues 120–132 are extracellular; the sequence is ERMIGWEIGCDVY. Residues Cys129 and Cys206 are joined by a disulfide bond. A helical transmembrane segment spans residues 133-152; it reads SVFGSISGMGQAMTNAAIAF. At 153–170 the chain is on the cytoplasmic side; the sequence is DRYRTISCPIDGRLNSKQ. Residues 171 to 195 traverse the membrane as a helical segment; that stretch reads AAVIIAFTWFWVTPFTVLPLLKVWG. The Extracellular portion of the chain corresponds to 196 to 219; that stretch reads RYTTEGFLTTCSFDFLTDDEDTKV. A helical membrane pass occupies residues 220 to 247; sequence FVTCIFIWAYVIPLIFIILFYSRLLSSI. At 248-282 the chain is on the cytoplasmic side; the sequence is RNHEKMLREQAKKMNVKSLVSNQDKERSAEVRIAK. Residues 283–306 traverse the membrane as a helical segment; it reads VAFTIFFLFLLAWTPYATVALIGV. The Extracellular segment spans residues 307–314; the sequence is YGNRELLT. Residues 315-339 traverse the membrane as a helical segment; it reads PVSTMLPAVFAKTVSCIDPWIYAIN. An N6-(retinylidene)lysine modification is found at Lys326. Over 340-377 the chain is Cytoplasmic; sequence HPRYRQELQKRCKWMGIHEPETTSDATSAQTEKIKTDE.

It belongs to the G-protein coupled receptor 1 family. Opsin subfamily. In terms of processing, phosphorylated on some or all of the serine and threonine residues present in the C-terminal region. Expressed in the dorsal region of the retina and sparsely expressed in the ventral region.

It localises to the membrane. In terms of biological role, visual pigments are the light-absorbing molecules that mediate vision. They consist of an apoprotein, opsin, covalently linked to 11-cis-retinal. This is Opsin, blue-sensitive (BLOP) from Apis mellifera (Honeybee).